Here is a 162-residue protein sequence, read N- to C-terminus: MTKLTLYPGTFDPITNGHLDLIKRSAAMFEHIIVAVAASPSKNTLFTLDERVQLVQEVTQDLPNVSVEGFSGLMVDFARQKQANLLVRGLRTTMDFEYEFGLTSMYRKLMPELESVFLTPSEEYAFLSSTIVREVALHGGSVEAFVPSVVNQALIHKVKSPV.

Thr10 provides a ligand contact to substrate. Residues Thr10–Phe11 and His18 contribute to the ATP site. The substrate site is built by Lys42, Met74, and Arg88. ATP is bound by residues Gly89–Arg91, Glu99, and Tyr124–Thr130.

This sequence belongs to the bacterial CoaD family. In terms of assembly, homohexamer. Mg(2+) is required as a cofactor.

The protein localises to the cytoplasm. The catalysed reaction is (R)-4'-phosphopantetheine + ATP + H(+) = 3'-dephospho-CoA + diphosphate. It functions in the pathway cofactor biosynthesis; coenzyme A biosynthesis; CoA from (R)-pantothenate: step 4/5. Reversibly transfers an adenylyl group from ATP to 4'-phosphopantetheine, yielding dephospho-CoA (dPCoA) and pyrophosphate. The polypeptide is Phosphopantetheine adenylyltransferase (Aliivibrio salmonicida (strain LFI1238) (Vibrio salmonicida (strain LFI1238))).